Consider the following 240-residue polypeptide: tRNA pseudouridine synthase A (240 aa).

D52 functions as the Nucleophile in the catalytic mechanism. Position 110 (Y110) interacts with substrate.

The protein belongs to the tRNA pseudouridine synthase TruA family. In terms of assembly, homodimer.

The enzyme catalyses uridine(38/39/40) in tRNA = pseudouridine(38/39/40) in tRNA. Formation of pseudouridine at positions 38, 39 and 40 in the anticodon stem and loop of transfer RNAs. The polypeptide is tRNA pseudouridine synthase A (Solibacter usitatus (strain Ellin6076)).